Consider the following 164-residue polypeptide: Translation initiation factor IF-3 (164 aa).

Belongs to the IF-3 family. As to quaternary structure, monomer.

The protein localises to the cytoplasm. Functionally, IF-3 binds to the 30S ribosomal subunit and shifts the equilibrium between 70S ribosomes and their 50S and 30S subunits in favor of the free subunits, thus enhancing the availability of 30S subunits on which protein synthesis initiation begins. This Bordetella bronchiseptica (strain ATCC BAA-588 / NCTC 13252 / RB50) (Alcaligenes bronchisepticus) protein is Translation initiation factor IF-3.